Here is a 259-residue protein sequence, read N- to C-terminus: uncharacterized protein (259 aa).

E46 is a catalytic residue.

The protein belongs to the PhzF family.

This is an uncharacterized protein from Pseudomonas aeruginosa (strain ATCC 15692 / DSM 22644 / CIP 104116 / JCM 14847 / LMG 12228 / 1C / PRS 101 / PAO1).